The chain runs to 112 residues: MDEIVRIVRDSMWYIPNVFMDDGKNEGHVSVNNVCHMYFTFFDVDTSSHLFKLVIKHCDLNKRGNSPLHCYTMNTRFNPSVLKILLHHGMRNFDSKDEKGHHYQSITRSLIY.

It belongs to the orthopoxviruses B25 protein family.

This chain is Truncated ankyrin repeat protein B25, found in Bos taurus (Bovine).